Consider the following 420-residue polypeptide: Ribulose bisphosphate carboxylase (420 aa).

Lysine 155 (proton acceptor) is an active-site residue. Lysine 157 contributes to the substrate binding site. 3 residues coordinate Mg(2+): lysine 181, aspartate 183, and glutamate 184. Lysine 181 carries the post-translational modification N6-carboxylysine. Residue histidine 273 is the Proton acceptor of the active site. Substrate is bound by residues arginine 274, histidine 306, 343-345 (SGG), and 365-368 (QAGG).

The protein belongs to the RuBisCO large chain family. Type III subfamily. In terms of assembly, homodimer or homodecamer. In contrast to form I RuBisCO, the form III RuBisCO is composed solely of large subunits. It depends on Mg(2+) as a cofactor.

It carries out the reaction 2 (2R)-3-phosphoglycerate + 2 H(+) = D-ribulose 1,5-bisphosphate + CO2 + H2O. It catalyses the reaction D-ribulose 1,5-bisphosphate + O2 = 2-phosphoglycolate + (2R)-3-phosphoglycerate + 2 H(+). Catalyzes the addition of molecular CO(2) and H(2)O to ribulose 1,5-bisphosphate (RuBP), generating two molecules of 3-phosphoglycerate (3-PGA). Functions in an archaeal AMP degradation pathway, together with AMP phosphorylase and R15P isomerase. The chain is Ribulose bisphosphate carboxylase from Pyrococcus furiosus (strain ATCC 43587 / DSM 3638 / JCM 8422 / Vc1).